We begin with the raw amino-acid sequence, 398 residues long: ATP-dependent RNA helicase eIF4A (398 aa).

A Q motif motif is present at residues 25–53; it reads DSFDSMDLKPELLRGIYAYGFERPSAIQQ. Residues 56–226 form the Helicase ATP-binding domain; sequence IMPIIKGSDV…TKFMRDPVRI (171 aa). 69-76 contacts ATP; it reads AQSGTGKT. A DEAD box motif is present at residues 174–177; that stretch reads DEAD. The Helicase C-terminal domain maps to 237–398; that stretch reads GIKQFYIAVE…EMPMNVADLI (162 aa).

The protein belongs to the DEAD box helicase family. eIF4A subfamily. As to quaternary structure, component of the eIF4F complex, which composition varies with external and internal environmental conditions. It is composed of at least eIF4A, eIF4E and eIF4G.

It is found in the cytoplasm. The enzyme catalyses ATP + H2O = ADP + phosphate + H(+). ATP-dependent RNA helicase which is a subunit of the eIF4F complex involved in cap recognition and is required for mRNA binding to ribosome. In the current model of translation initiation, eIF4A unwinds RNA secondary structures in the 5'-UTR of mRNAs which is necessary to allow efficient binding of the small ribosomal subunit, and subsequent scanning for the initiator codon. The protein is ATP-dependent RNA helicase eIF4A (tif1) of Aspergillus clavatus (strain ATCC 1007 / CBS 513.65 / DSM 816 / NCTC 3887 / NRRL 1 / QM 1276 / 107).